We begin with the raw amino-acid sequence, 238 residues long: CD209 antigen-like protein A (238 aa).

At 1-51 (MSDSKEMGKRQLRPLDEELLTSSHTRHSIKGFGFQTNSGFSSFTGCLVHSQ) the chain is on the cytoplasmic side. The helical; Signal-anchor for type II membrane protein transmembrane segment at 52–72 (VPLALQVLFLAVCSVLLVVIL) threads the bilayer. At 73–238 (VKVYKIPSSQ…KKLSTSCPSK (166 aa)) the chain is on the extracellular side. Cysteines 108 and 119 form a disulfide. The C-type lectin domain occupies 115–229 (FQGSCYFFSV…CTNKKFWICK (115 aa)). The N-linked (GlcNAc...) asparagine glycan is linked to Asn-130. 2 disulfide bridges follow: Cys-136–Cys-228 and Cys-207–Cys-220. Residues Glu-198, Asn-200, Leu-202, Glu-205, Asn-216, and Asp-217 each coordinate Ca(2+). The N-linked (GlcNAc...) asparagine glycan is linked to Asn-216.

Predominantly expressed in dendritic cells. Detected at very low levels in lung, spleen, lymph nodes and bone marrow.

Its subcellular location is the membrane. Functionally, probable pathogen-recognition receptor. May mediate the endocytosis of pathogens which are subsequently degraded in lysosomal compartments. May recognize in a calcium-dependent manner high mannose N-linked oligosaccharides in a variety of pathogen antigens. The protein is CD209 antigen-like protein A (Cd209a) of Mus musculus (Mouse).